The sequence spans 365 residues: Sulfate/thiosulfate import ATP-binding protein CysA (365 aa).

One can recognise an ABC transporter domain in the interval 3–237; sequence IEIANIKKSF…PATRFVLEFM (235 aa). Residue 35–42 participates in ATP binding; it reads GPSGSGKT.

This sequence belongs to the ABC transporter superfamily. Sulfate/tungstate importer (TC 3.A.1.6) family. The complex is composed of two ATP-binding proteins (CysA), two transmembrane proteins (CysT and CysW) and a solute-binding protein (CysP).

Its subcellular location is the cell inner membrane. It catalyses the reaction sulfate(out) + ATP + H2O = sulfate(in) + ADP + phosphate + H(+). The catalysed reaction is thiosulfate(out) + ATP + H2O = thiosulfate(in) + ADP + phosphate + H(+). In terms of biological role, part of the ABC transporter complex CysAWTP involved in sulfate/thiosulfate import. Responsible for energy coupling to the transport system. This chain is Sulfate/thiosulfate import ATP-binding protein CysA, found in Escherichia coli O6:H1 (strain CFT073 / ATCC 700928 / UPEC).